The chain runs to 127 residues: Small ribosomal subunit protein eS8 (127 aa).

This sequence belongs to the eukaryotic ribosomal protein eS8 family. In terms of assembly, part of the 30S ribosomal subunit.

The polypeptide is Small ribosomal subunit protein eS8 (Nanoarchaeum equitans (strain Kin4-M)).